A 195-amino-acid polypeptide reads, in one-letter code: Interferon tau (195 aa).

The signal sequence occupies residues 1 to 23 (MAFVLSLRMALVLVSYCPGGSLG). 2 cysteine pairs are disulfide-bonded: C24–C122 and C52–C162. N-linked (GlcNAc...) asparagine glycosylation occurs at N101.

It belongs to the alpha/beta interferon family. IFN-alphaII subfamily. Constitutively and exclusively expressed in the mononuclear cells of the extraembryonic trophectoderm.

The protein resides in the secreted. Functionally, paracrine hormone primarily responsible for maternal recognition of pregnancy. Interacts with endometrial receptors, probably type I interferon receptors, and blocks estrogen receptor expression, preventing the estrogen-induced increase in oxytocin receptor expression in the endometrium. This results in the suppression of the pulsatile endometrial release of the luteolytic hormone prostaglandin F2-alpha, hindering the regression of the corpus luteum (luteolysis) and therefore a return to ovarian cyclicity. This, and a possible direct effect of IFN-tau on prostaglandin synthesis, leads in turn to continued ovarian progesterone secretion, which stimulates the secretion by the endometrium of the nutrients required for the growth of the conceptus. In summary, displays particularly high antiviral and antiproliferative potency concurrently with particular weak cytotoxicity, high antiluteolytic activity and immunomodulatory properties. In contrast with other IFNs, IFN-tau is not virally inducible. This chain is Interferon tau (IFNT), found in Ovibos moschatus (Muskox).